The primary structure comprises 328 residues: CCAAT/enhancer-binding protein beta (328 aa).

Position 3 is an asymmetric dimethylarginine; by CARM1 (Arg3). Lys39 carries the post-translational modification N6-methylated lysine. Residues 165–274 (DSCKGPRKEE…NIAVRKSRDK (110 aa)) are disordered. Over residues 200–231 (SVPSGSSGNLSTSSSSSPPGTPNPSESSKSAA) the composition is skewed to low complexity. Thr220 is modified (phosphothreonine; by RPS6KA1, CDK2 and MAPK). Basic and acidic residues predominate over residues 248–264 (KCVDKHSDEYKLRRERN). Positions 254–317 (SDEYKLRRER…STLRNLFKQL (64 aa)) constitute a bZIP domain. Residues 258–278 (KLRRERNNIAVRKSRDKAKMR) form a basic motif region. Residues 280-287 (LETQHKVL) form a leucine-zipper region.

It belongs to the bZIP family. C/EBP subfamily. In terms of assembly, binds DNA as a dimer. Interacts (not methylated) with MED23, MED26, SMARCA2, SMARCB1 and SMARCC1. Methylated. Methylation at Arg-3 by CARM1 and at Lys-39 by EHMT2, inhibit transactivation activity. Methylation is probably inhibited by phosphorylation at Thr-220. As to expression, specifically expressed in myelomoncytic cells.

The protein resides in the nucleus. Its function is as follows. Important transcriptional activator regulating the expression of genes involved in immune and inflammatory responses. Binds to regulatory regions of several acute-phase and cytokines genes and probably plays a role in the regulation of acute-phase reaction, inflammation and hemopoiesis. The consensus recognition site is 5'-T[TG]NNGNAA[TG]-3'. Functions in brown adipose tissue (BAT) differentiation. Regulates the transcriptional induction of peroxisome proliferator-activated receptor gamma (PPARG). Binds to the MGF and MIM-1 promoters and activates the transcription of these genes. Important transcription factor regulating the expression of genes involved in immune and inflammatory responses. Also plays a significant role in adipogenesis, as well as in the gluconeogenic pathway, liver regeneration, and hematopoiesis. The consensus recognition site is 5'-T[TG]NNGNAA[TG]-3'. Its functional capacity is governed by protein interactions and post-translational protein modifications. This is CCAAT/enhancer-binding protein beta (CEBPB) from Gallus gallus (Chicken).